The following is a 358-amino-acid chain: Protein FAM50 homolog (358 aa).

Over residues Ala-104–Lys-113 the composition is skewed to basic and acidic residues. Residues Ala-104–Glu-151 are disordered. The span at Asp-122–Glu-137 shows a compositional bias: acidic residues. Positions Gly-138–Glu-151 are enriched in basic and acidic residues.

It belongs to the FAM50 family.

The polypeptide is Protein FAM50 homolog (Anopheles gambiae (African malaria mosquito)).